We begin with the raw amino-acid sequence, 209 residues long: MAKLYFYYSAMNAGKTTTLLQSAHNYRERGMRTLILTPKLDHRAGSGVVASRIGLRADGRIFERDTELQQLVERDIHNDGALHCVLVDEAQFLSRAQVWQLSEVVDRLRIPVLCYGLRTDFRGELFEGSQFLLAWADELEEIKTICHSGSKATMTVRVDAHGHAVQDGPQVEIGGNERYVSVSRAEFKKIMRGEGRIDPLQIALPLPVA.

Residues Ser9–Thr16 and Asp88–Gln91 each bind ATP. The active-site Proton acceptor is the Glu89.

The protein belongs to the thymidine kinase family. As to quaternary structure, homotetramer.

The protein localises to the cytoplasm. The catalysed reaction is thymidine + ATP = dTMP + ADP + H(+). The chain is Thymidine kinase from Xanthomonas axonopodis pv. citri (strain 306).